Consider the following 319-residue polypeptide: Sliding-clamp-loader large subunit (319 aa).

ATP contacts are provided by residues 12 to 15 (EQKY), isoleucine 24, 53 to 58 (GTGKTT), and arginine 205.

It belongs to the Tevenvirinae sliding-clamp-loader large subunit family. In terms of assembly, the sliding-clamp-loader consists of 4 large subunits and 1 small subunit. Interacts with the sliding clamp; this interaction allows the sliding-clamp-loader to open the sliding clamp. Part of the replicase complex that includes the DNA polymerase, the polymerase clamp, the clamp loader complex, the single-stranded DNA binding protein, the primase, the helicase and the helicase assembly factor.

In terms of biological role, forms the sliding-clamp-loader together with the small subunit. Functions as an ATPase enzyme. The clamp loader holds the clamp in an open conformation and places it onto the DNA. 4 ATP molecules must bind to the sliding-clamp-loader before the latter can open the sliding clamp. ATP hydrolysis triggers the detachment of the sliding clamp from the sliding-clamp-loader, freeing the sliding clamp to track along DNA. The chain is Sliding-clamp-loader large subunit (44) from Enterobacteria phage T4 (Bacteriophage T4).